Reading from the N-terminus, the 369-residue chain is MKSRAAVAFEVGKPLQIVEIDVAPPQQGEVLVKITHTGVCHTDAFTLSGDDPEGLFPVVLGHEGAGIVVEVGEGVTSVQLGDHVIPLYTAECGKCLFCRSGKTNLCVAVRATQGKGVMPDGTSRFSYNGQSLYHYMGCSTFSEYTVVAEVSLAKINPEANHEHVCLLGCGVTTGIGAVHNTAKVQPGDSVAVFGLGGIGLAVVQGARQAKAGRIIAIDTNPAKFELAKQMGATDCINPKDHDQPIQQVIVEMTGWGVDHSFECIGNVEVMRSALECAHRGWGQSVIIGVAGAGQEISTRPFQLVTGRKWMGTAFGGVKGRSQLPGMVEQSMRGEIQLAPFVTHTMELKDINQAFDLMHDGKSIRSVIHY.

The Zn(2+) site is built by C40, H62, C92, C95, C98, C106, and C169.

The protein belongs to the zinc-containing alcohol dehydrogenase family. Class-III subfamily. In terms of assembly, homodimer. It depends on Zn(2+) as a cofactor.

Its subcellular location is the cytoplasm. The enzyme catalyses S-(hydroxymethyl)glutathione + NADP(+) = S-formylglutathione + NADPH + H(+). The catalysed reaction is S-(hydroxymethyl)glutathione + NAD(+) = S-formylglutathione + NADH + H(+). It catalyses the reaction a primary alcohol + NAD(+) = an aldehyde + NADH + H(+). It carries out the reaction a secondary alcohol + NAD(+) = a ketone + NADH + H(+). The enzyme catalyses S-nitrosoglutathione + NADH + H(+) = S-(hydroxysulfenamide)glutathione + NAD(+). Functionally, has high formaldehyde dehydrogenase activity in the presence of glutathione and catalyzes the oxidation of normal alcohols in a reaction that is not GSH-dependent. In addition, hemithiolacetals other than those formed from GSH, including omega-thiol fatty acids, also are substrates. Also acts as a S-nitroso-glutathione reductase by catalyzing the NADH-dependent reduction of S-nitrosoglutathione. This chain is S-(hydroxymethyl)glutathione dehydrogenase (frmA), found in Synechocystis sp. (strain ATCC 27184 / PCC 6803 / Kazusa).